Consider the following 318-residue polypeptide: Biotin synthase (318 aa).

A Radical SAM core domain is found at 46–272 (DGVDVEQLNN…RSVVKISGGR (227 aa)). Positions 61, 65, and 68 each coordinate [4Fe-4S] cluster. Residues cysteine 105, cysteine 138, cysteine 197, and lysine 267 each contribute to the [2Fe-2S] cluster site.

The protein belongs to the radical SAM superfamily. Biotin synthase family. As to quaternary structure, homodimer. It depends on [4Fe-4S] cluster as a cofactor. Requires [2Fe-2S] cluster as cofactor.

The enzyme catalyses (4R,5S)-dethiobiotin + (sulfur carrier)-SH + 2 reduced [2Fe-2S]-[ferredoxin] + 2 S-adenosyl-L-methionine = (sulfur carrier)-H + biotin + 2 5'-deoxyadenosine + 2 L-methionine + 2 oxidized [2Fe-2S]-[ferredoxin]. It functions in the pathway cofactor biosynthesis; biotin biosynthesis; biotin from 7,8-diaminononanoate: step 2/2. Catalyzes the conversion of dethiobiotin (DTB) to biotin by the insertion of a sulfur atom into dethiobiotin via a radical-based mechanism. The polypeptide is Biotin synthase (Cenarchaeum symbiosum (strain A)).